A 229-amino-acid polypeptide reads, in one-letter code: MDICLEKIKIEQTWKEFLKDEFLKPYFLEIKTHYINALNEGKTIYPPANLIFNAFNLAPLQDLKIILLGQDPYHNPHQAMGLSFSVPMGVKIPPSLLNIYKELQNDLNIPMAKHGDLSKWAKQGVLLLNSILSVEANKPASHAHFGWQKFTDAVISKLSDEKEGLVFLLWGNYAKNKKVLINPQKHFILEAAHPSPLARNAFLGCKHFSKSNEILLKLGKSPIDWNLNL.

The Proton acceptor role is filled by Asp-71.

Belongs to the uracil-DNA glycosylase (UDG) superfamily. UNG family.

The protein resides in the cytoplasm. It carries out the reaction Hydrolyzes single-stranded DNA or mismatched double-stranded DNA and polynucleotides, releasing free uracil.. Functionally, excises uracil residues from the DNA which can arise as a result of misincorporation of dUMP residues by DNA polymerase or due to deamination of cytosine. In Campylobacter lari (strain RM2100 / D67 / ATCC BAA-1060), this protein is Uracil-DNA glycosylase.